A 751-amino-acid polypeptide reads, in one-letter code: MEDLSSPDSTLLQGGHNLLSSASFQEAVTFKDVIVDFTQEEWKQLDPGQRDLFRDVTLENYTHLVSIGLQVSKPDVISQLEQGTEPWIMEPSIPVGTCADWETRLENSVSAPEPDISEEELSPEVIVEKHKRDDSWSSNLLESWEYEGSLERQQANQQTLPKEIKVTEKTIPSWEKGPVNNEFGKSVNVSSNLVTQEPSPEETSTKRSIKQNSNPVKKEKSCKCNECGKAFSYCSALIRHQRTHTGEKPYKCNECEKAFSRSENLINHQRIHTGDKPYKCDQCGKGFIEGPSLTQHQRIHTGEKPYKCDECGKAFSQRTHLVQHQRIHTGEKPYTCNECGKAFSQRGHFMEHQKIHTGEKPFKCDECDKTFTRSTHLTQHQKIHTGEKTYKCNECGKAFNGPSTFIRHHMIHTGEKPYECNECGKAFSQHSNLTQHQKTHTGEKPYDCAECGKSFSYWSSLAQHLKIHTGEKPYKCNECGKAFSYCSSLTQHRRIHTREKPFECSECGKAFSYLSNLNQHQKTHTQEKAYECKECGKAFIRSSSLAKHERIHTGEKPYQCHECGKTFSYGSSLIQHRKIHTGERPYKCNECGRAFNQNIHLTQHKRIHTGAKPYECAECGKAFRHCSSLAQHQKTHTEEKPYQCNKCEKTFSQSSHLTQHQRIHTGEKPYKCNECDKAFSRSTHLTEHQNTHTGEKPYNCNECRKTFSQSTYLIQHQRIHSGEKPFGCNDCGKSFRYRSALNKHQRLHPGI.

The region spanning 28–99 is the KRAB domain; that stretch reads VTFKDVIVDF…EPSIPVGTCA (72 aa). Phosphoserine occurs at positions 117, 122, and 199. Residues 191–202 show a composition bias toward polar residues; it reads SNLVTQEPSPEE. The disordered stretch occupies residues 191 to 212; the sequence is SNLVTQEPSPEETSTKRSIKQN. K206 participates in a covalent cross-link: Glycyl lysine isopeptide (Lys-Gly) (interchain with G-Cter in SUMO2). 19 C2H2-type zinc fingers span residues 222–244, 250–272, 278–300, 306–328, 334–356, 362–384, 390–412, 418–440, 446–468, 474–496, 502–524, 530–552, 558–580, 586–608, 614–636, 642–664, 670–692, 698–720, and 726–748; these read CKCN…QRTH, YKCN…QRIH, YKCD…QRIH, YTCN…QKIH, FKCD…QKIH, YKCN…HMIH, YECN…QKTH, YDCA…LKIH, YKCN…RRIH, FECS…QKTH, YECK…ERIH, YQCH…RKIH, YKCN…KRIH, YECA…QKTH, YQCN…QRIH, YKCN…QNTH, YNCN…QRIH, and FGCN…QRLH.

This sequence belongs to the krueppel C2H2-type zinc-finger protein family. In terms of tissue distribution, predominant expression in testis.

The protein resides in the nucleus. May be involved in transcriptional regulation. The protein is Zinc finger protein 184 (ZNF184) of Homo sapiens (Human).